The primary structure comprises 485 residues: Ribulose bisphosphate carboxylase large chain (485 aa).

The propeptide occupies 1–2 (MS). Residue P3 is modified to N-acetylproline. K14 carries the post-translational modification N6,N6,N6-trimethyllysine. 2 residues coordinate substrate: N123 and T173. The active-site Proton acceptor is K175. K177 contacts substrate. Positions 201, 203, and 204 each coordinate Mg(2+). K201 carries the N6-carboxylysine modification. Residue H294 is the Proton acceptor of the active site. 3 residues coordinate substrate: R295, H327, and S379.

Belongs to the RuBisCO large chain family. Type I subfamily. As to quaternary structure, heterohexadecamer of 8 large chains and 8 small chains; disulfide-linked. The disulfide link is formed within the large subunit homodimers. Requires Mg(2+) as cofactor. Post-translationally, the disulfide bond which can form in the large chain dimeric partners within the hexadecamer appears to be associated with oxidative stress and protein turnover.

The protein localises to the plastid. It is found in the chloroplast. It catalyses the reaction 2 (2R)-3-phosphoglycerate + 2 H(+) = D-ribulose 1,5-bisphosphate + CO2 + H2O. It carries out the reaction D-ribulose 1,5-bisphosphate + O2 = 2-phosphoglycolate + (2R)-3-phosphoglycerate + 2 H(+). RuBisCO catalyzes two reactions: the carboxylation of D-ribulose 1,5-bisphosphate, the primary event in carbon dioxide fixation, as well as the oxidative fragmentation of the pentose substrate in the photorespiration process. Both reactions occur simultaneously and in competition at the same active site. The polypeptide is Ribulose bisphosphate carboxylase large chain (Flaveria bidentis (Coastal plain yellowtops)).